The sequence spans 310 residues: MSQAIVVAALYKFVTLEDYVELREPLLKTMLDNNVKGTLLLAQEGINGTVSGTREGIDGLLAWLRSDPRLVDIDHKESYCDEQPFYRTKVKLKKEIVTLGVPGVDPNKAVGTYVEPKDWNALISDPEVLLIDTRNDYEVAIGTFKGAIDPKTETFREFPEYIKANFDPSKHKKVAMFCTGGIRCEKASSYMLGEGFESVYHLKGGILKYFEEVPQEESLWDGDCFVFDNRVTVRHDLSEGEYDQCHACRHPINAQERASEHYSPGVSCPHCWDSLSEKTRRSAIDRQKQIELAKARNLPHPIGYYYKAEA.

In terms of domain architecture, Rhodanese spans 124–218 (SDPEVLLIDT…YFEEVPQEES (95 aa)). Residue cysteine 178 is the Cysteine persulfide intermediate of the active site.

This sequence belongs to the TrhO family.

The enzyme catalyses uridine(34) in tRNA + AH2 + O2 = 5-hydroxyuridine(34) in tRNA + A + H2O. Catalyzes oxygen-dependent 5-hydroxyuridine (ho5U) modification at position 34 in tRNAs. The polypeptide is tRNA uridine(34) hydroxylase (Pseudomonas putida (strain ATCC 47054 / DSM 6125 / CFBP 8728 / NCIMB 11950 / KT2440)).